Here is a 442-residue protein sequence, read N- to C-terminus: Histidine--tRNA ligase (442 aa).

The segment at 416-442 (SGDETTVPVEEFPPEGGEELPTYEDYE) is disordered. Residues 427–442 (FPPEGGEELPTYEDYE) show a composition bias toward acidic residues.

The protein belongs to the class-II aminoacyl-tRNA synthetase family.

The protein resides in the cytoplasm. The catalysed reaction is tRNA(His) + L-histidine + ATP = L-histidyl-tRNA(His) + AMP + diphosphate + H(+). The protein is Histidine--tRNA ligase of Halorubrum lacusprofundi (strain ATCC 49239 / DSM 5036 / JCM 8891 / ACAM 34).